Reading from the N-terminus, the 253-residue chain is Methionine-R-sulfoxide reductase B3, mitochondrial (253 aa).

The N-terminal stretch at 1 to 56 is a signal peptide; that stretch reads MPPAAPSVARSREGGGIGQRRLVFPKSARRTLPCPIALCLGLCLAAAAATTTRASA. Lys102 carries the N6-acetyllysine modification. One can recognise a MsrB domain in the interval 107 to 229; sequence QQELRKRLTP…NSASLSFTPA (123 aa). Positions 146, 149, 195, and 198 each coordinate Zn(2+). Cys218 acts as the Nucleophile in catalysis. Residues 227–253 form a disordered region; it reads TPADSSEAEGSGIKESGSPAAADRAEL. The residue at position 244 (Ser244) is a Phosphoserine. The Endoplasmic reticulum retention signal signature appears at 250 to 253; sequence RAEL.

This sequence belongs to the MsrB Met sulfoxide reductase family. As to quaternary structure, monomer. The cofactor is Zn(2+). As to expression, widely expressed. Detected in the sensory epithelia of the organ of Corti and vestibular end organs as early as P2 up to adulthood (at protein level). In the organ of Corti, present in inner and outer hair cells and, to a lesser extent, in supporting cells (at protein level). In hair cells, distributed throughout the cell body. Barely detectable level in stereocilia. Also observed in spiral ganglion neurons, but not in the stria vascularis. In the vestibular end organs, found throughout the sensory epithelium, but more intense expression in hair cells than in supporting cells (at protein level). In vestibular hair cells, present within cell bodies and to a lesser extent in kinocilia. Barely detectable in stereocilia.

It localises to the endoplasmic reticulum. The catalysed reaction is L-methionyl-[protein] + [thioredoxin]-disulfide + H2O = L-methionyl-(R)-S-oxide-[protein] + [thioredoxin]-dithiol. The enzyme catalyses [thioredoxin]-disulfide + L-methionine + H2O = L-methionine (R)-S-oxide + [thioredoxin]-dithiol. Catalyzes the reduction of free and protein-bound methionine sulfoxide to methionine. The chain is Methionine-R-sulfoxide reductase B3, mitochondrial (Msrb3) from Mus musculus (Mouse).